The sequence spans 423 residues: Methylenetetrahydrofolate--tRNA-(uracil-5-)-methyltransferase TrmFO 2 (423 aa).

Residue 8–13 (GAGLSG) coordinates FAD.

This sequence belongs to the MnmG family. TrmFO subfamily. Requires FAD as cofactor.

The protein localises to the cytoplasm. The enzyme catalyses uridine(54) in tRNA + (6R)-5,10-methylene-5,6,7,8-tetrahydrofolate + NADH + H(+) = 5-methyluridine(54) in tRNA + (6S)-5,6,7,8-tetrahydrofolate + NAD(+). The catalysed reaction is uridine(54) in tRNA + (6R)-5,10-methylene-5,6,7,8-tetrahydrofolate + NADPH + H(+) = 5-methyluridine(54) in tRNA + (6S)-5,6,7,8-tetrahydrofolate + NADP(+). Its function is as follows. Catalyzes the folate-dependent formation of 5-methyl-uridine at position 54 (M-5-U54) in all tRNAs. This Mycoplasma capricolum subsp. capricolum (strain California kid / ATCC 27343 / NCTC 10154) protein is Methylenetetrahydrofolate--tRNA-(uracil-5-)-methyltransferase TrmFO 2.